A 499-amino-acid chain; its full sequence is MNFFIKSCFLDKEKTDCIVVSVFELSELSDSAIYLDKCSNGHITSLIKLGDIQGKIGDTLMLYKVPKILSKRILLVGCGKKDEINIIRFKKILKNTIHAIKKKSIKNIVYSFSNINIDNIYWMIRRMVLSLKESLYETIKINNTNIKNTNIHSITLNIIKKNDLFIAKTALKHALAIDHAITSTKNLSNLPPNICNPLYLSYKAQELSKKYENNIVVEIIDIKKMKELGMNAYIAVGNGSKNKPFMSVIKYSGNNIVNKKIIAFVGKGLTFDSGGISIKPALHMHEMKYDMCGAAAVYGTLIMAAELQLPLTVIGILSGCENMVGSHSFRPGDVLTTMSGQTVEILNTDAEGRLVLCDSLTYLERFSPDIVIDVATLTGACVTALGESVSGLFSNNEELSNQLLHASQETDDKIWSLPLFSEYHKELNSNIADFSNIGRGKAGAITAACFLSKFTKKYNWAHLDIAGTAWKSGKKSGATGRPVELLCQFLLNQSNYIYN.

Residues K267 and D272 each coordinate Mn(2+). K279 is an active-site residue. 3 residues coordinate Mn(2+): D290, D349, and E351. The active site involves R353.

The protein belongs to the peptidase M17 family. The cofactor is Mn(2+).

Its subcellular location is the cytoplasm. The catalysed reaction is Release of an N-terminal amino acid, Xaa-|-Yaa-, in which Xaa is preferably Leu, but may be other amino acids including Pro although not Arg or Lys, and Yaa may be Pro. Amino acid amides and methyl esters are also readily hydrolyzed, but rates on arylamides are exceedingly low.. It carries out the reaction Release of an N-terminal amino acid, preferentially leucine, but not glutamic or aspartic acids.. Functionally, presumably involved in the processing and regular turnover of intracellular proteins. Catalyzes the removal of unsubstituted N-terminal amino acids from various peptides. This is Probable cytosol aminopeptidase from Buchnera aphidicola subsp. Acyrthosiphon pisum (strain Tuc7).